An 82-amino-acid chain; its full sequence is Small ribosomal subunit protein bS16 (82 aa).

It belongs to the bacterial ribosomal protein bS16 family.

The polypeptide is Small ribosomal subunit protein bS16 (Salmonella agona (strain SL483)).